The following is a 52-amino-acid chain: Metallothionein-2 (52 aa).

2 consecutive repeats follow at residues 43–47 and 48–52; these read QTCKC.

The protein belongs to the metallothionein superfamily. Type 10 family.

Its function is as follows. The metallothioneins are involved in the cellular sequestration of toxic metal ions. In Candida glabrata (strain ATCC 2001 / BCRC 20586 / JCM 3761 / NBRC 0622 / NRRL Y-65 / CBS 138) (Yeast), this protein is Metallothionein-2 (MT-II).